The chain runs to 72 residues: MLATKMSVTFCFLLMLTTVMLPTEAKTVAGRTACTQHTSCDTPGAKYCCQNSDCCGGSEHFCASFGQCMRSF.

The N-terminal stretch at 1–21 (MLATKMSVTFCFLLMLTTVML) is a signal peptide. The propeptide occupies 22–31 (PTEAKTVAGR).

Belongs to the teretoxin H (TH) superfamily. In terms of processing, contains 4 disulfide bonds. In terms of tissue distribution, expressed by the venom duct.

Its subcellular location is the secreted. The chain is Teretoxin Tan11.1 from Terebra anilis (Auger snail).